We begin with the raw amino-acid sequence, 179 residues long: Isopentenyl-diphosphate Delta-isomerase (179 aa).

Mn(2+) contacts are provided by histidine 24 and histidine 30. A Nudix hydrolase domain is found at 28 to 160; sequence LLHRAFSIFI…PEKFTVWFLT (133 aa). The active site involves cysteine 65. Histidine 67 contacts Mn(2+). Glutamate 85 is a Mg(2+) binding site. Positions 110 and 112 each coordinate Mn(2+). Glutamate 112 is a catalytic residue.

The protein belongs to the IPP isomerase type 1 family. As to quaternary structure, homodimer. Requires Mg(2+) as cofactor. Mn(2+) serves as cofactor.

It is found in the cytoplasm. The catalysed reaction is isopentenyl diphosphate = dimethylallyl diphosphate. It functions in the pathway isoprenoid biosynthesis; dimethylallyl diphosphate biosynthesis; dimethylallyl diphosphate from isopentenyl diphosphate: step 1/1. In terms of biological role, catalyzes the 1,3-allylic rearrangement of the homoallylic substrate isopentenyl (IPP) to its highly electrophilic allylic isomer, dimethylallyl diphosphate (DMAPP). This chain is Isopentenyl-diphosphate Delta-isomerase, found in Serratia proteamaculans (strain 568).